We begin with the raw amino-acid sequence, 217 residues long: 3-oxo-tetronate 4-phosphate decarboxylase (217 aa).

2 residues coordinate Zn(2+): histidine 93 and histidine 95. Tyrosine 120 acts as the Proton donor in catalysis.

This sequence belongs to the aldolase class II family. AraD/FucA subfamily. It depends on Zn(2+) as a cofactor.

It carries out the reaction 3-dehydro-4-O-phospho-D-erythronate + H(+) = dihydroxyacetone phosphate + CO2. The enzyme catalyses 3-dehydro-4-O-phospho-L-erythronate + H(+) = dihydroxyacetone phosphate + CO2. Its function is as follows. Catalyzes the decarboxylation of 3-oxo-tetronate 4-phosphate to dihydroxyacetone phosphate (DHAP) and CO(2). This chain is 3-oxo-tetronate 4-phosphate decarboxylase, found in Cupriavidus necator (strain ATCC 17699 / DSM 428 / KCTC 22496 / NCIMB 10442 / H16 / Stanier 337) (Ralstonia eutropha).